Reading from the N-terminus, the 183-residue chain is Photosystem I assembly protein Ycf3 (183 aa).

3 TPR repeats span residues 35–68 (AFIY…EIDS), 72–105 (SYIL…NSFL), and 120–153 (GEQA…SPDN).

Belongs to the Ycf3 family.

Its subcellular location is the plastid. It localises to the chloroplast thylakoid membrane. In terms of biological role, essential for the assembly of the photosystem I (PSI) complex. May act as a chaperone-like factor to guide the assembly of the PSI subunits. The polypeptide is Photosystem I assembly protein Ycf3 (Adiantum capillus-veneris (Maidenhair fern)).